A 349-amino-acid polypeptide reads, in one-letter code: MKHVFSGFQTFLKQVHSPIYLALAVVIFSAANPVTSRIIELGKTYEINGRNPISFCNVLFVGNLCALGLMILIFHPDWQLHKLRKLTRKDWFLLTVTAILSRAIAPGLMFSALEKTNVTNVVLIGRLEPVFTLILSILLLKISVNWLSMVATLISFVGVAVTVFWGVADPLDMVINFDFGLGESFVAIAAFISAITTILSKQQLQSIPVGIFTVYRSLLGTFVFFWIAVIIYGFDHFMDVSSPILWRWMLIYGAIIVVVGQVAWLAGLKNASFIQINLASLVTPILAIIFAYLILLETPTNAQYLGGILLLLGAILSFIDNLKTAKDKQASKPLNSREAMDTNVGFRGV.

The next 10 membrane-spanning stretches (helical) occupy residues 15–35 (VHSP…NPVT), 53–73 (ISFC…MILI), 91–111 (WFLL…LMFS), 120–140 (NVVL…ILLL), 147–167 (LSMV…FWGV), 179–199 (FGLG…TTIL), 218–238 (LLGT…DHFM), 248–268 (WMLI…LAGL), 276–296 (INLA…LILL), and 302–322 (AQYL…IDNL). EamA domains lie at 39-164 (IELG…VTVF) and 191-319 (FISA…LSFI).

This sequence belongs to the EamA transporter family.

The protein resides in the cell membrane. This is an uncharacterized protein from Synechocystis sp. (strain ATCC 27184 / PCC 6803 / Kazusa).